Consider the following 338-residue polypeptide: Glycerol-3-phosphate dehydrogenase [NAD(P)+] (338 aa).

NADPH-binding residues include Ser14, Tyr15, His35, and Lys109. Residues Lys109, Gly138, and Thr140 each contribute to the sn-glycerol 3-phosphate site. An NADPH-binding site is contributed by Ala142. 5 residues coordinate sn-glycerol 3-phosphate: Lys194, Asp247, Ser257, Arg258, and Asn259. The active-site Proton acceptor is the Lys194. Arg258 provides a ligand contact to NADPH. Val282 and Glu284 together coordinate NADPH.

This sequence belongs to the NAD-dependent glycerol-3-phosphate dehydrogenase family.

It localises to the cytoplasm. It carries out the reaction sn-glycerol 3-phosphate + NAD(+) = dihydroxyacetone phosphate + NADH + H(+). It catalyses the reaction sn-glycerol 3-phosphate + NADP(+) = dihydroxyacetone phosphate + NADPH + H(+). It functions in the pathway membrane lipid metabolism; glycerophospholipid metabolism. In terms of biological role, catalyzes the reduction of the glycolytic intermediate dihydroxyacetone phosphate (DHAP) to sn-glycerol 3-phosphate (G3P), the key precursor for phospholipid synthesis. In Shewanella sediminis (strain HAW-EB3), this protein is Glycerol-3-phosphate dehydrogenase [NAD(P)+].